The primary structure comprises 300 residues: 7-methylguanosine phosphate-specific 5'-nucleotidase (300 aa).

Asp41 functions as the Nucleophile in the catalytic mechanism. Asp41 and Asp43 together coordinate Mg(2+). The active-site Proton donor is Asp43. Glu88 serves as a coordination point for CMP. Glu88 serves as a coordination point for N(7)-methyl-GMP. Substrate is bound by residues 156 to 157 (SA) and Lys205. Asp230 is a binding site for Mg(2+). N6-acetyllysine is present on Lys256.

It belongs to the pyrimidine 5'-nucleotidase family. Monomer.

It is found in the cytoplasm. It carries out the reaction N(7)-methyl-GMP + H2O = N(7)-methylguanosine + phosphate. The catalysed reaction is CMP + H2O = cytidine + phosphate. The enzyme catalyses a ribonucleoside 5'-phosphate + H2O = a ribonucleoside + phosphate. Specifically hydrolyzes 7-methylguanosine monophosphate (m(7)GMP) to 7-methylguanosine and inorganic phosphate. The specific activity for m(7)GMP may protect cells against undesired salvage of m(7)GMP and its incorporation into nucleic acids. Also has weak activity for CMP. UMP and purine nucleotides are poor substrates. In Mus musculus (Mouse), this protein is 7-methylguanosine phosphate-specific 5'-nucleotidase (Nt5c3b).